The chain runs to 306 residues: D-alanine--D-alanine ligase (306 aa).

Catalysis depends on residues E15 and S150. Positions 101–303 (KLLWKSLSLR…FDELILKILK (203 aa)) constitute an ATP-grasp domain. 134–189 (ILKLKFPVVIKPNNAGSSIGITIVNHPDLLIDSINLAFNYSNNIIIEKFLKGTEYT) is an ATP binding site. D257, E270, and N272 together coordinate Mg(2+). S281 is an active-site residue.

Belongs to the D-alanine--D-alanine ligase family. Mg(2+) serves as cofactor. Mn(2+) is required as a cofactor.

Its subcellular location is the cytoplasm. It carries out the reaction 2 D-alanine + ATP = D-alanyl-D-alanine + ADP + phosphate + H(+). It participates in cell wall biogenesis; peptidoglycan biosynthesis. Functionally, cell wall formation. This chain is D-alanine--D-alanine ligase, found in Buchnera aphidicola subsp. Schizaphis graminum (strain Sg).